The primary structure comprises 357 residues: Glycerol-3-phosphate dehydrogenase [NAD(P)+] (357 aa).

NADPH contacts are provided by Ser30, Phe31, Arg51, and Lys124. Sn-glycerol 3-phosphate is bound by residues Lys124 and Gly152. Ala156 lines the NADPH pocket. 5 residues coordinate sn-glycerol 3-phosphate: Lys207, Asp260, Ser270, Arg271, and Asn272. The active-site Proton acceptor is Lys207. Residue Arg271 participates in NADPH binding. An NADPH-binding site is contributed by Glu297.

It belongs to the NAD-dependent glycerol-3-phosphate dehydrogenase family.

The protein resides in the cytoplasm. The catalysed reaction is sn-glycerol 3-phosphate + NAD(+) = dihydroxyacetone phosphate + NADH + H(+). The enzyme catalyses sn-glycerol 3-phosphate + NADP(+) = dihydroxyacetone phosphate + NADPH + H(+). It functions in the pathway membrane lipid metabolism; glycerophospholipid metabolism. Its function is as follows. Catalyzes the reduction of the glycolytic intermediate dihydroxyacetone phosphate (DHAP) to sn-glycerol 3-phosphate (G3P), the key precursor for phospholipid synthesis. The sequence is that of Glycerol-3-phosphate dehydrogenase [NAD(P)+] from Acinetobacter baumannii (strain SDF).